A 250-amino-acid polypeptide reads, in one-letter code: Glucosamine-6-phosphate deaminase (250 aa).

Residue D67 is the Proton acceptor; for enolization step of the active site. The active-site For ring-opening step is N136. The active-site Proton acceptor; for ring-opening step is H138. Residue E143 is the For ring-opening step of the active site.

Belongs to the glucosamine/galactosamine-6-phosphate isomerase family. NagB subfamily.

The catalysed reaction is alpha-D-glucosamine 6-phosphate + H2O = beta-D-fructose 6-phosphate + NH4(+). Its pathway is amino-sugar metabolism; N-acetylneuraminate degradation; D-fructose 6-phosphate from N-acetylneuraminate: step 5/5. Functionally, catalyzes the reversible isomerization-deamination of glucosamine 6-phosphate (GlcN6P) to form fructose 6-phosphate (Fru6P) and ammonium ion. The sequence is that of Glucosamine-6-phosphate deaminase from Oceanobacillus iheyensis (strain DSM 14371 / CIP 107618 / JCM 11309 / KCTC 3954 / HTE831).